A 321-amino-acid chain; its full sequence is MTRRAILKGTGSALPRTRVSNAELAERVDTSDEWIVERTGIRFRHIAEPDETTATLGADAARRALEAAGLQPADIGLIIVATATPDNTFPASATKVQALLGAPDCIAFDVAAVCSGFLYAVSVADAMLRTGAARHALVIGSETFSRILDWNDRTTCVLFGDGAGAVVLSAEDVADDRGVLATRLHAEGRYCDMLYVDGGPSTTGTVGHVRMQGREVFRHAVTNLAAVLGEVMRDVGLSADDIDWVVPHQANKRIIDATAKKLGLPADRVVLTVDQHANTSAASVPLALDLAVRDGRIKRGDLVVLEAMGGGFTWGAAVLRV.

Active-site residues include cysteine 114 and histidine 248. The interval 249–253 (QANKR) is ACP-binding. Asparagine 278 is a catalytic residue.

This sequence belongs to the thiolase-like superfamily. FabH family. Homodimer.

The protein resides in the cytoplasm. The enzyme catalyses malonyl-[ACP] + acetyl-CoA + H(+) = 3-oxobutanoyl-[ACP] + CO2 + CoA. It functions in the pathway lipid metabolism; fatty acid biosynthesis. In terms of biological role, catalyzes the condensation reaction of fatty acid synthesis by the addition to an acyl acceptor of two carbons from malonyl-ACP. Catalyzes the first condensation reaction which initiates fatty acid synthesis and may therefore play a role in governing the total rate of fatty acid production. Possesses both acetoacetyl-ACP synthase and acetyl transacylase activities. Its substrate specificity determines the biosynthesis of branched-chain and/or straight-chain of fatty acids. This Sphingopyxis alaskensis (strain DSM 13593 / LMG 18877 / RB2256) (Sphingomonas alaskensis) protein is Beta-ketoacyl-[acyl-carrier-protein] synthase III.